The chain runs to 429 residues: Glutamate-1-semialdehyde 2,1-aminomutase 2 (429 aa).

The residue at position 268 (K268) is an N6-(pyridoxal phosphate)lysine.

Belongs to the class-III pyridoxal-phosphate-dependent aminotransferase family. HemL subfamily. As to quaternary structure, homodimer. Requires pyridoxal 5'-phosphate as cofactor.

It is found in the cytoplasm. The catalysed reaction is (S)-4-amino-5-oxopentanoate = 5-aminolevulinate. It functions in the pathway porphyrin-containing compound metabolism; protoporphyrin-IX biosynthesis; 5-aminolevulinate from L-glutamyl-tRNA(Glu): step 2/2. The sequence is that of Glutamate-1-semialdehyde 2,1-aminomutase 2 from Bacillus anthracis (strain A0248).